We begin with the raw amino-acid sequence, 308 residues long: tRNA pseudouridine synthase B (308 aa).

The active-site Nucleophile is the aspartate 48.

It belongs to the pseudouridine synthase TruB family. Type 1 subfamily.

It catalyses the reaction uridine(55) in tRNA = pseudouridine(55) in tRNA. Functionally, responsible for synthesis of pseudouridine from uracil-55 in the psi GC loop of transfer RNAs. The sequence is that of tRNA pseudouridine synthase B from Histophilus somni (strain 129Pt) (Haemophilus somnus).